A 428-amino-acid polypeptide reads, in one-letter code: Citrate synthase (428 aa).

Residues His265, His306, and Asp363 contribute to the active site.

The protein belongs to the citrate synthase family. Homohexamer.

It catalyses the reaction oxaloacetate + acetyl-CoA + H2O = citrate + CoA + H(+). The protein operates within carbohydrate metabolism; tricarboxylic acid cycle; isocitrate from oxaloacetate: step 1/2. Its activity is regulated as follows. Allosterically inhibited by NADH. This chain is Citrate synthase (gltA), found in Pseudomonas aeruginosa (strain ATCC 15692 / DSM 22644 / CIP 104116 / JCM 14847 / LMG 12228 / 1C / PRS 101 / PAO1).